The sequence spans 151 residues: Ribosome maturation factor RimP (151 aa).

The protein belongs to the RimP family.

It is found in the cytoplasm. Its function is as follows. Required for maturation of 30S ribosomal subunits. This Shewanella amazonensis (strain ATCC BAA-1098 / SB2B) protein is Ribosome maturation factor RimP.